The primary structure comprises 276 residues: Putative translation initiation factor eIF-2B subunit 2-like (276 aa).

Belongs to the eIF-2B alpha/beta/delta subunits family. Complex of two different subunits.

Its function is as follows. Catalyzes the exchange of initiation factor 2-bound GDP for GTP. In Pyrococcus horikoshii (strain ATCC 700860 / DSM 12428 / JCM 9974 / NBRC 100139 / OT-3), this protein is Putative translation initiation factor eIF-2B subunit 2-like.